The sequence spans 309 residues: MKWLEIQVTTSQEAEEAVTGILYDLGAGGVVIKNPNDVKELAQTSEWDYFDPSLLEEGEEVKISAYFLITTDITDKVNFLKERIWELKSFGINVGNVKVEVSEVDEEDWADSWKKYYKPLKVGKRIVVRPLWEEYSPKEGEIVIDLDPGMAFGTGTHETTKMCLQFLEDIVKPGAIVFDVGCGSGILSIAASKLGASYVYGADVDEMAVKIARENVKLNGLENVEIFQSDLLKNFRGKADVIVANIIADAIIRLIPDVLPHLKEEGLFLASGIIKDRFEEVKERAEEFFEIIDMKEEKEWLSILMKKKG.

4 residues coordinate S-adenosyl-L-methionine: threonine 160, glycine 181, aspartate 203, and asparagine 245.

It belongs to the methyltransferase superfamily. PrmA family.

It localises to the cytoplasm. It catalyses the reaction L-lysyl-[protein] + 3 S-adenosyl-L-methionine = N(6),N(6),N(6)-trimethyl-L-lysyl-[protein] + 3 S-adenosyl-L-homocysteine + 3 H(+). In terms of biological role, methylates ribosomal protein L11. In Caldanaerobacter subterraneus subsp. tengcongensis (strain DSM 15242 / JCM 11007 / NBRC 100824 / MB4) (Thermoanaerobacter tengcongensis), this protein is Ribosomal protein L11 methyltransferase.